The primary structure comprises 448 residues: Methylenetetrahydrofolate--tRNA-(uracil-5-)-methyltransferase TrmFO (448 aa).

10 to 15 (GAGLAG) serves as a coordination point for FAD.

It belongs to the MnmG family. TrmFO subfamily. Requires FAD as cofactor.

Its subcellular location is the cytoplasm. The enzyme catalyses uridine(54) in tRNA + (6R)-5,10-methylene-5,6,7,8-tetrahydrofolate + NADH + H(+) = 5-methyluridine(54) in tRNA + (6S)-5,6,7,8-tetrahydrofolate + NAD(+). The catalysed reaction is uridine(54) in tRNA + (6R)-5,10-methylene-5,6,7,8-tetrahydrofolate + NADPH + H(+) = 5-methyluridine(54) in tRNA + (6S)-5,6,7,8-tetrahydrofolate + NADP(+). Catalyzes the folate-dependent formation of 5-methyl-uridine at position 54 (M-5-U54) in all tRNAs. The polypeptide is Methylenetetrahydrofolate--tRNA-(uracil-5-)-methyltransferase TrmFO (Lactococcus lactis subsp. cremoris (strain MG1363)).